A 100-amino-acid polypeptide reads, in one-letter code: Small ribosomal subunit protein uS14c (100 aa).

The protein belongs to the universal ribosomal protein uS14 family. In terms of assembly, part of the 30S ribosomal subunit.

It is found in the plastid. It localises to the chloroplast. Binds 16S rRNA, required for the assembly of 30S particles. This Physcomitrium patens (Spreading-leaved earth moss) protein is Small ribosomal subunit protein uS14c.